A 223-amino-acid chain; its full sequence is Small ribosomal subunit protein uS3 (223 aa).

One can recognise a KH type-2 domain in the interval 39-115 (IRKYIEKNLA…RVFINIVEIK (77 aa)).

This sequence belongs to the universal ribosomal protein uS3 family. Part of the 30S ribosomal subunit. Forms a tight complex with proteins S10 and S14.

In terms of biological role, binds the lower part of the 30S subunit head. Binds mRNA in the 70S ribosome, positioning it for translation. This chain is Small ribosomal subunit protein uS3, found in Leuconostoc citreum (strain KM20).